The sequence spans 192 residues: UPF0316 protein SSP0880 (192 aa).

The next 3 helical transmembrane spans lie at 8–28 (PWLM…CLTM), 40–60 (VAAI…GMVM), and 66–86 (IQNV…GMKI).

This sequence belongs to the UPF0316 family.

It is found in the cell membrane. The polypeptide is UPF0316 protein SSP0880 (Staphylococcus saprophyticus subsp. saprophyticus (strain ATCC 15305 / DSM 20229 / NCIMB 8711 / NCTC 7292 / S-41)).